Here is a 92-residue protein sequence, read N- to C-terminus: Small ribosomal subunit protein uS19 (92 aa).

The protein belongs to the universal ribosomal protein uS19 family.

Functionally, protein S19 forms a complex with S13 that binds strongly to the 16S ribosomal RNA. The polypeptide is Small ribosomal subunit protein uS19 (Borrelia duttonii (strain Ly)).